The primary structure comprises 451 residues: Bifunctional protein GlmU (451 aa).

Residues 1 to 229 (MQRHAIVLAA…FEEIMGVNDR (229 aa)) form a pyrophosphorylase region. UDP-N-acetyl-alpha-D-glucosamine is bound by residues 8–11 (LAAG), Lys22, Gln72, and 77–78 (GT). Asp102 provides a ligand contact to Mg(2+). 3 residues coordinate UDP-N-acetyl-alpha-D-glucosamine: Gly139, Glu154, and Asn227. Asn227 contributes to the Mg(2+) binding site. Residues 230 to 250 (VMLSEAEKAFRKRINEQHMKN) are linker. The interval 251-451 (GVTIIDPVTT…QTTKEGYLKK (201 aa)) is N-acetyltransferase. UDP-N-acetyl-alpha-D-glucosamine contacts are provided by Arg332 and Lys350. His362 serves as the catalytic Proton acceptor. UDP-N-acetyl-alpha-D-glucosamine contacts are provided by Tyr365 and Asn376. Residues 385 to 386 (NY), Ala422, and Arg439 contribute to the acetyl-CoA site.

The protein in the N-terminal section; belongs to the N-acetylglucosamine-1-phosphate uridyltransferase family. It in the C-terminal section; belongs to the transferase hexapeptide repeat family. Homotrimer. It depends on Mg(2+) as a cofactor.

The protein localises to the cytoplasm. It catalyses the reaction alpha-D-glucosamine 1-phosphate + acetyl-CoA = N-acetyl-alpha-D-glucosamine 1-phosphate + CoA + H(+). It carries out the reaction N-acetyl-alpha-D-glucosamine 1-phosphate + UTP + H(+) = UDP-N-acetyl-alpha-D-glucosamine + diphosphate. It participates in nucleotide-sugar biosynthesis; UDP-N-acetyl-alpha-D-glucosamine biosynthesis; N-acetyl-alpha-D-glucosamine 1-phosphate from alpha-D-glucosamine 6-phosphate (route II): step 2/2. Its pathway is nucleotide-sugar biosynthesis; UDP-N-acetyl-alpha-D-glucosamine biosynthesis; UDP-N-acetyl-alpha-D-glucosamine from N-acetyl-alpha-D-glucosamine 1-phosphate: step 1/1. It functions in the pathway bacterial outer membrane biogenesis; LPS lipid A biosynthesis. Its function is as follows. Catalyzes the last two sequential reactions in the de novo biosynthetic pathway for UDP-N-acetylglucosamine (UDP-GlcNAc). The C-terminal domain catalyzes the transfer of acetyl group from acetyl coenzyme A to glucosamine-1-phosphate (GlcN-1-P) to produce N-acetylglucosamine-1-phosphate (GlcNAc-1-P), which is converted into UDP-GlcNAc by the transfer of uridine 5-monophosphate (from uridine 5-triphosphate), a reaction catalyzed by the N-terminal domain. The protein is Bifunctional protein GlmU of Staphylococcus saprophyticus subsp. saprophyticus (strain ATCC 15305 / DSM 20229 / NCIMB 8711 / NCTC 7292 / S-41).